The primary structure comprises 157 residues: GDP-mannose mannosyl hydrolase (157 aa).

Residues 2-3 (FL), phenylalanine 8, and arginine 36 contribute to the substrate site. The 151-residue stretch at 3–153 (LRQEDFAAVV…SRAYFSPDAP (151 aa)) folds into the Nudix hydrolase domain. Residues glycine 49, glutamate 69, and glutamine 122 each coordinate Mg(2+). Residues 50–71 (GRVCKDETLEAAFARLTQAELG) carry the Nudix box motif.

Belongs to the Nudix hydrolase family. In terms of assembly, homodimer. It depends on Mg(2+) as a cofactor.

It catalyses the reaction GDP-alpha-D-mannose + H2O = D-mannose + GDP + H(+). Functionally, hydrolyzes GDP-mannose. This is GDP-mannose mannosyl hydrolase from Salmonella typhi.